The sequence spans 457 residues: Bifunctional protein GlmU (457 aa).

The pyrophosphorylase stretch occupies residues 1–230; the sequence is MLNVVILAAG…SWETLGVNSR (230 aa). Residues 7–10, Lys21, Gln73, 78–79, 104–106, Gly140, Glu155, Asn170, and Asn228 each bind UDP-N-acetyl-alpha-D-glucosamine; these read LAAG, GT, and YGD. Asp106 contributes to the Mg(2+) binding site. Residue Asn228 coordinates Mg(2+). A linker region spans residues 231 to 251; sequence VQQAQLERAWQSELARRQLEA. The N-acetyltransferase stretch occupies residues 252-457; that stretch reads GVTLADPARF…EGWKRPVKKS (206 aa). UDP-N-acetyl-alpha-D-glucosamine-binding residues include Arg334 and Lys352. His364 serves as the catalytic Proton acceptor. 2 residues coordinate UDP-N-acetyl-alpha-D-glucosamine: Tyr367 and Asn378. Residues Ala381, 387-388, Ser406, Ala424, and Arg441 contribute to the acetyl-CoA site; that span reads NY.

The protein in the N-terminal section; belongs to the N-acetylglucosamine-1-phosphate uridyltransferase family. It in the C-terminal section; belongs to the transferase hexapeptide repeat family. In terms of assembly, homotrimer. Mg(2+) is required as a cofactor.

The protein localises to the cytoplasm. The enzyme catalyses alpha-D-glucosamine 1-phosphate + acetyl-CoA = N-acetyl-alpha-D-glucosamine 1-phosphate + CoA + H(+). It carries out the reaction N-acetyl-alpha-D-glucosamine 1-phosphate + UTP + H(+) = UDP-N-acetyl-alpha-D-glucosamine + diphosphate. It participates in nucleotide-sugar biosynthesis; UDP-N-acetyl-alpha-D-glucosamine biosynthesis; N-acetyl-alpha-D-glucosamine 1-phosphate from alpha-D-glucosamine 6-phosphate (route II): step 2/2. The protein operates within nucleotide-sugar biosynthesis; UDP-N-acetyl-alpha-D-glucosamine biosynthesis; UDP-N-acetyl-alpha-D-glucosamine from N-acetyl-alpha-D-glucosamine 1-phosphate: step 1/1. It functions in the pathway bacterial outer membrane biogenesis; LPS lipid A biosynthesis. Catalyzes the last two sequential reactions in the de novo biosynthetic pathway for UDP-N-acetylglucosamine (UDP-GlcNAc). The C-terminal domain catalyzes the transfer of acetyl group from acetyl coenzyme A to glucosamine-1-phosphate (GlcN-1-P) to produce N-acetylglucosamine-1-phosphate (GlcNAc-1-P), which is converted into UDP-GlcNAc by the transfer of uridine 5-monophosphate (from uridine 5-triphosphate), a reaction catalyzed by the N-terminal domain. This chain is Bifunctional protein GlmU, found in Bordetella bronchiseptica (strain ATCC BAA-588 / NCTC 13252 / RB50) (Alcaligenes bronchisepticus).